The sequence spans 456 residues: Bifunctional protein GlmU (456 aa).

The segment at Met-1 to Arg-229 is pyrophosphorylase. UDP-N-acetyl-alpha-D-glucosamine is bound by residues Leu-11–Gly-14, Lys-25, Gln-76, Gly-81–Thr-82, Tyr-103–Asp-105, Gly-140, Glu-154, Asn-169, and Asn-227. Asp-105 contacts Mg(2+). Residue Asn-227 participates in Mg(2+) binding. A linker region spans residues Leu-230 to Ala-250. Positions Gly-251–Lys-456 are N-acetyltransferase. Arg-333 and Lys-351 together coordinate UDP-N-acetyl-alpha-D-glucosamine. The Proton acceptor role is filled by His-363. Residues Tyr-366 and Asn-377 each contribute to the UDP-N-acetyl-alpha-D-glucosamine site. Acetyl-CoA is bound by residues Ala-380, Asn-386–Tyr-387, Ser-405, Ala-423, and Arg-440.

In the N-terminal section; belongs to the N-acetylglucosamine-1-phosphate uridyltransferase family. This sequence in the C-terminal section; belongs to the transferase hexapeptide repeat family. As to quaternary structure, homotrimer. Mg(2+) is required as a cofactor.

The protein resides in the cytoplasm. It catalyses the reaction alpha-D-glucosamine 1-phosphate + acetyl-CoA = N-acetyl-alpha-D-glucosamine 1-phosphate + CoA + H(+). The catalysed reaction is N-acetyl-alpha-D-glucosamine 1-phosphate + UTP + H(+) = UDP-N-acetyl-alpha-D-glucosamine + diphosphate. The protein operates within nucleotide-sugar biosynthesis; UDP-N-acetyl-alpha-D-glucosamine biosynthesis; N-acetyl-alpha-D-glucosamine 1-phosphate from alpha-D-glucosamine 6-phosphate (route II): step 2/2. Its pathway is nucleotide-sugar biosynthesis; UDP-N-acetyl-alpha-D-glucosamine biosynthesis; UDP-N-acetyl-alpha-D-glucosamine from N-acetyl-alpha-D-glucosamine 1-phosphate: step 1/1. It participates in bacterial outer membrane biogenesis; LPS lipid A biosynthesis. Catalyzes the last two sequential reactions in the de novo biosynthetic pathway for UDP-N-acetylglucosamine (UDP-GlcNAc). The C-terminal domain catalyzes the transfer of acetyl group from acetyl coenzyme A to glucosamine-1-phosphate (GlcN-1-P) to produce N-acetylglucosamine-1-phosphate (GlcNAc-1-P), which is converted into UDP-GlcNAc by the transfer of uridine 5-monophosphate (from uridine 5-triphosphate), a reaction catalyzed by the N-terminal domain. The chain is Bifunctional protein GlmU from Yersinia pseudotuberculosis serotype O:1b (strain IP 31758).